The following is a 695-amino-acid chain: Translation initiation factor IF-2 (695 aa).

The disordered stretch occupies residues 60–92 (KKSASSKKKTEKEVEEEEIETPKKKKKQEEKIP). The tr-type G domain occupies 184-358 (QRPPVVTVMG…EMSEIKCIPT (175 aa)). Positions 193-200 (GHVDHGKT) are G1. 193–200 (GHVDHGKT) lines the GTP pocket. Positions 218–222 (GITQS) are G2. The tract at residues 239 to 242 (DTPG) is G3. Residues 239–243 (DTPGH) and 293–296 (NKID) each bind GTP. The interval 293-296 (NKID) is G4. Residues 330–332 (SAK) are G5.

Belongs to the TRAFAC class translation factor GTPase superfamily. Classic translation factor GTPase family. IF-2 subfamily.

It localises to the cytoplasm. Functionally, one of the essential components for the initiation of protein synthesis. Protects formylmethionyl-tRNA from spontaneous hydrolysis and promotes its binding to the 30S ribosomal subunits. Also involved in the hydrolysis of GTP during the formation of the 70S ribosomal complex. This is Translation initiation factor IF-2 from Kosmotoga olearia (strain ATCC BAA-1733 / DSM 21960 / TBF 19.5.1).